The following is a 433-amino-acid chain: Citrate synthase, mitochondrial (433 aa).

Residues H274 and H320 contribute to the active site. R329 lines the oxaloacetate pocket. D375 is an active-site residue. 2 residues coordinate oxaloacetate: R401 and R421.

This sequence belongs to the citrate synthase family. Homodimer.

Its subcellular location is the mitochondrion matrix. It carries out the reaction oxaloacetate + acetyl-CoA + H2O = citrate + CoA + H(+). It functions in the pathway carbohydrate metabolism; tricarboxylic acid cycle; isocitrate from oxaloacetate: step 1/2. Key enzyme of the Krebs tricarboxylic acid cycle which catalyzes the synthesis of citrate from acetyl coenzyme A and oxaloacetate. The protein is Citrate synthase, mitochondrial (CS) of Gallus gallus (Chicken).